A 917-amino-acid polypeptide reads, in one-letter code: Calcium-activated chloride channel regulator 1 (917 aa).

The first 21 residues, 1–21, serve as a signal peptide directing secretion; the sequence is MGSFRSSLFILVLHLLEGAQS. The tract at residues 46-199 is metalloprotease domain; sequence DERLIQNIKD…AIRGTNVLPQ (154 aa). His156 is a binding site for Zn(2+). Glu157 is a catalytic residue. Positions 160 and 167 each coordinate Zn(2+). The VWFA domain occupies 306 to 475; it reads IVCLVLDKSG…NGLIDAFGAL (170 aa). N-linked (GlcNAc...) asparagine glycans are attached at residues Asn503, Asn772, Asn806, Asn812, Asn838, and Asn893.

It belongs to the CLCR family. In terms of processing, glycosylated. The translation product is autoproteolytically cleaved by the metalloprotease domain in the endoplasmic reticulum into a N-terminal and a C-terminal products that remain physically associated with each other. The cleavage is necessary for calcium-activated chloride channel (CaCC) activation activity. As to expression, expressed in ileum, trachea, and the major salivary glands. In ileum, expressed to the crypt and villus epithelia, whereas in trachea expressed in both surface epithelium and submucosal glands.

It localises to the secreted. The protein localises to the extracellular space. In terms of biological role, may be involved in mediating calcium-activated chloride conductance. May play critical roles in goblet cell metaplasia, mucus hypersecretion, cystic fibrosis and AHR. May be involved in the regulation of mucus production and/or secretion by goblet cells. Involved in the regulation of tissue inflammation in the innate immune response. May play a role as a tumor suppressor. Induces MUC5AC. Induces a cAMP-dependent chloride conductance possibly through effects on CFTR in colon carcinoma cells. This is Calcium-activated chloride channel regulator 1 (CLCA1) from Sus scrofa (Pig).